The chain runs to 189 residues: dCTP deaminase, dUMP-forming (189 aa).

DCTP-binding positions include 101–106, aspartate 119, 127–129, glutamine 148, tyrosine 162, and glutamine 174; these read KSSLGR and TLE. Glutamate 129 functions as the Proton donor/acceptor in the catalytic mechanism.

The protein belongs to the dCTP deaminase family. As to quaternary structure, homotrimer.

It catalyses the reaction dCTP + 2 H2O = dUMP + NH4(+) + diphosphate. The protein operates within pyrimidine metabolism; dUMP biosynthesis; dUMP from dCTP: step 1/1. In terms of biological role, bifunctional enzyme that catalyzes both the deamination of dCTP to dUTP and the hydrolysis of dUTP to dUMP without releasing the toxic dUTP intermediate. The sequence is that of dCTP deaminase, dUMP-forming from Rhodococcus opacus (strain B4).